Here is a 219-residue protein sequence, read N- to C-terminus: 2-hydroxy-3-keto-5-methylthiopentenyl-1-phosphate phosphatase (219 aa).

Belongs to the HAD-like hydrolase superfamily. MtnX family.

It carries out the reaction 2-hydroxy-5-methylsulfanyl-3-oxopent-1-enyl phosphate + H2O = 1,2-dihydroxy-5-(methylsulfanyl)pent-1-en-3-one + phosphate. It participates in amino-acid biosynthesis; L-methionine biosynthesis via salvage pathway; L-methionine from S-methyl-5-thio-alpha-D-ribose 1-phosphate: step 4/6. Dephosphorylates 2-hydroxy-3-keto-5-methylthiopentenyl-1-phosphate (HK-MTPenyl-1-P) yielding 1,2-dihydroxy-3-keto-5-methylthiopentene (DHK-MTPene). The sequence is that of 2-hydroxy-3-keto-5-methylthiopentenyl-1-phosphate phosphatase from Bacillus anthracis (strain A0248).